The chain runs to 204 residues: Tumor necrosis factor receptor superfamily member 26 (204 aa).

Residues 1–19 (MTRLRLLLLLGLLLRVAVC) form the signal peptide. The Extracellular portion of the chain corresponds to 20 to 164 (SVNTITLCKI…SQCFCFSKPL (145 aa)). Cystine bridges form between Cys27–Cys38, Cys39–Cys52, Cys42–Cys61, Cys64–Cys79, Cys82–Cys95, Cys85–Cys103, Cys105–Cys120, Cys123–Cys135, and Cys126–Cys143. 3 TNFR-Cys repeats span residues 27–61 (CKIGEFKHENLCCLQCSAGTYLRNPCQENHNKSEC), 63–103 (PCDS…DRVC), and 104–143 (QCKQGTYCDSENCLERCHTCSSCPDGRVVRKCNATMDTVC). Asn57 carries N-linked (GlcNAc...) asparagine glycosylation. Asn136 carries an N-linked (GlcNAc...) asparagine glycan. Residues 165-185 (GIVVIIAAFIIIIGAVIILIL) form a helical membrane-spanning segment. Topologically, residues 186–204 (KIICYCKRGENIQLSSTML) are cytoplasmic.

In terms of tissue distribution, expressed in thymus and spleen. Detectable levels in lung.

The protein localises to the membrane. This is Tumor necrosis factor receptor superfamily member 26 (Tnfrsf26) from Mus musculus (Mouse).